A 104-amino-acid chain; its full sequence is Large ribosomal subunit protein bL21 (104 aa).

It belongs to the bacterial ribosomal protein bL21 family. Part of the 50S ribosomal subunit. Contacts protein L20.

This protein binds to 23S rRNA in the presence of protein L20. The protein is Large ribosomal subunit protein bL21 of Clostridium tetani (strain Massachusetts / E88).